Consider the following 354-residue polypeptide: Methylthioribose-1-phosphate isomerase (354 aa).

Residues 58-60 (RGA), R101, and Q204 contribute to the substrate site. D245 serves as the catalytic Proton donor. 255–256 (NK) contacts substrate.

It belongs to the eIF-2B alpha/beta/delta subunits family. MtnA subfamily.

It catalyses the reaction 5-(methylsulfanyl)-alpha-D-ribose 1-phosphate = 5-(methylsulfanyl)-D-ribulose 1-phosphate. It functions in the pathway amino-acid biosynthesis; L-methionine biosynthesis via salvage pathway; L-methionine from S-methyl-5-thio-alpha-D-ribose 1-phosphate: step 1/6. Its function is as follows. Catalyzes the interconversion of methylthioribose-1-phosphate (MTR-1-P) into methylthioribulose-1-phosphate (MTRu-1-P). This chain is Methylthioribose-1-phosphate isomerase, found in Xylella fastidiosa (strain 9a5c).